The following is a 182-amino-acid chain: NADH-quinone oxidoreductase subunit I (182 aa).

4Fe-4S ferredoxin-type domains are found at residues 50 to 82 and 92 to 121; these read IILSRDPDGDERCVACNLCAVACPVGCISLQKA and EFFRINFSRCIFCGLCEEACPTTAIQMTPD. [4Fe-4S] cluster contacts are provided by Cys-62, Cys-65, Cys-68, Cys-72, Cys-101, Cys-104, Cys-107, and Cys-111.

Belongs to the complex I 23 kDa subunit family. In terms of assembly, NDH-1 is composed of 14 different subunits. Subunits NuoA, H, J, K, L, M, N constitute the membrane sector of the complex. [4Fe-4S] cluster serves as cofactor.

The protein resides in the cell inner membrane. It catalyses the reaction a quinone + NADH + 5 H(+)(in) = a quinol + NAD(+) + 4 H(+)(out). In terms of biological role, NDH-1 shuttles electrons from NADH, via FMN and iron-sulfur (Fe-S) centers, to quinones in the respiratory chain. The immediate electron acceptor for the enzyme in this species is believed to be ubiquinone. Couples the redox reaction to proton translocation (for every two electrons transferred, four hydrogen ions are translocated across the cytoplasmic membrane), and thus conserves the redox energy in a proton gradient. The protein is NADH-quinone oxidoreductase subunit I of Psychrobacter cryohalolentis (strain ATCC BAA-1226 / DSM 17306 / VKM B-2378 / K5).